A 316-amino-acid polypeptide reads, in one-letter code: Acetyl-coenzyme A carboxylase carboxyl transferase subunit alpha (316 aa).

The 255-residue stretch at 36–290 (PLRTQLETLR…GSVISRHLDD (255 aa)) folds into the CoA carboxyltransferase C-terminal domain.

Belongs to the AccA family. As to quaternary structure, acetyl-CoA carboxylase is a heterohexamer composed of biotin carboxyl carrier protein (AccB), biotin carboxylase (AccC) and two subunits each of ACCase subunit alpha (AccA) and ACCase subunit beta (AccD).

It localises to the cytoplasm. It catalyses the reaction N(6)-carboxybiotinyl-L-lysyl-[protein] + acetyl-CoA = N(6)-biotinyl-L-lysyl-[protein] + malonyl-CoA. It participates in lipid metabolism; malonyl-CoA biosynthesis; malonyl-CoA from acetyl-CoA: step 1/1. Component of the acetyl coenzyme A carboxylase (ACC) complex. First, biotin carboxylase catalyzes the carboxylation of biotin on its carrier protein (BCCP) and then the CO(2) group is transferred by the carboxyltransferase to acetyl-CoA to form malonyl-CoA. The chain is Acetyl-coenzyme A carboxylase carboxyl transferase subunit alpha from Deinococcus radiodurans (strain ATCC 13939 / DSM 20539 / JCM 16871 / CCUG 27074 / LMG 4051 / NBRC 15346 / NCIMB 9279 / VKM B-1422 / R1).